Reading from the N-terminus, the 93-residue chain is UPF0297 protein PEPE_1262 (93 aa).

This sequence belongs to the UPF0297 family.

This Pediococcus pentosaceus (strain ATCC 25745 / CCUG 21536 / LMG 10740 / 183-1w) protein is UPF0297 protein PEPE_1262.